The following is a 706-amino-acid chain: Elongation factor G (706 aa).

In terms of domain architecture, tr-type G spans glutamate 8–leucine 295. Residues alanine 17 to threonine 24, aspartate 92 to histidine 96, and asparagine 146 to aspartate 149 each bind GTP.

This sequence belongs to the TRAFAC class translation factor GTPase superfamily. Classic translation factor GTPase family. EF-G/EF-2 subfamily.

The protein resides in the cytoplasm. Catalyzes the GTP-dependent ribosomal translocation step during translation elongation. During this step, the ribosome changes from the pre-translocational (PRE) to the post-translocational (POST) state as the newly formed A-site-bound peptidyl-tRNA and P-site-bound deacylated tRNA move to the P and E sites, respectively. Catalyzes the coordinated movement of the two tRNA molecules, the mRNA and conformational changes in the ribosome. The sequence is that of Elongation factor G from Ruegeria sp. (strain TM1040) (Silicibacter sp.).